The primary structure comprises 221 residues: PKHD-type hydroxylase NATL1_16191 (221 aa).

The 95-residue stretch at 80–174 (LIHGVMFTQS…RHVCVGWIQS (95 aa)) folds into the Fe2OG dioxygenase domain. Fe cation-binding residues include histidine 98, aspartate 100, and histidine 155. Residue arginine 165 participates in 2-oxoglutarate binding.

The cofactor is Fe(2+). L-ascorbate serves as cofactor.

This is PKHD-type hydroxylase NATL1_16191 from Prochlorococcus marinus (strain NATL1A).